Consider the following 201-residue polypeptide: Probable nicotinate-nucleotide adenylyltransferase (201 aa).

It belongs to the NadD family.

The enzyme catalyses nicotinate beta-D-ribonucleotide + ATP + H(+) = deamido-NAD(+) + diphosphate. It functions in the pathway cofactor biosynthesis; NAD(+) biosynthesis; deamido-NAD(+) from nicotinate D-ribonucleotide: step 1/1. In terms of biological role, catalyzes the reversible adenylation of nicotinate mononucleotide (NaMN) to nicotinic acid adenine dinucleotide (NaAD). This is Probable nicotinate-nucleotide adenylyltransferase from Clostridium botulinum (strain Okra / Type B1).